The primary structure comprises 224 residues: Protein PLANT CADMIUM RESISTANCE 6 (224 aa).

A helical transmembrane segment spans residues 131–151 (GMLYGLICCLFAIPCVYTCTF).

The protein belongs to the cornifelin family.

The protein resides in the membrane. May be involved in heavy metals transport. The polypeptide is Protein PLANT CADMIUM RESISTANCE 6 (PCR6) (Arabidopsis thaliana (Mouse-ear cress)).